A 364-amino-acid polypeptide reads, in one-letter code: MHITQLVLRHFRCFDVVDFFPLPGLNFFIGENGSGKTSLLEAVHLMGYGRSFRGRVRDGLIRHGSENLEIFVDWQETALINARRHRAGLSHYGQEWIGRLDGQKIIHLASLCAALAVITFESSSYQLINSNAELRRRFLDWGLFHVEPDFLDLWRCYTHVLKQRNSLLKQKEELAMLEAWDQKLSEVGEQLTFRRFQYLERLKQRVIPLISRITPNLKIHGFNFNHGWRRHELPLIDALFISRERDYQYGYTSLGPHRSDWTPQFSSIPGVHVLSRGQGKLITLMCLLAQAQDFFDQRGEWPILSLDDLASELDQKHQWRVLEMLAEIPAQVLITGTEIPQGLKPFFSVGAMFHVEHGAITRMF.

Residue 30 to 37 (GENGSGKT) coordinates ATP.

It belongs to the RecF family.

It localises to the cytoplasm. The RecF protein is involved in DNA metabolism; it is required for DNA replication and normal SOS inducibility. RecF binds preferentially to single-stranded, linear DNA. It also seems to bind ATP. The chain is DNA replication and repair protein RecF from Xylella fastidiosa (strain M12).